Reading from the N-terminus, the 151-residue chain is Transcriptional repressor NrdR (151 aa).

The segment at 3–34 (CPYCGYIEDRVIDSRPTDEGSAIRRRRECSKC) is a zinc-finger region. The region spanning 49 to 139 (IMVIKKDKSR…VYRQFKDINT (91 aa)) is the ATP-cone domain.

Belongs to the NrdR family. Zn(2+) is required as a cofactor.

Its function is as follows. Negatively regulates transcription of bacterial ribonucleotide reductase nrd genes and operons by binding to NrdR-boxes. This is Transcriptional repressor NrdR from Acetivibrio thermocellus (strain ATCC 27405 / DSM 1237 / JCM 9322 / NBRC 103400 / NCIMB 10682 / NRRL B-4536 / VPI 7372) (Clostridium thermocellum).